The primary structure comprises 247 residues: 6-carboxyhexanoate--CoA ligase (247 aa).

The protein belongs to the BioW family. In terms of assembly, homodimer. Mg(2+) is required as a cofactor.

It carries out the reaction heptanedioate + ATP + CoA = 6-carboxyhexanoyl-CoA + AMP + diphosphate. Its pathway is metabolic intermediate metabolism; pimeloyl-CoA biosynthesis; pimeloyl-CoA from pimelate: step 1/1. Its function is as follows. Catalyzes the transformation of pimelate into pimeloyl-CoA with concomitant hydrolysis of ATP to AMP. The sequence is that of 6-carboxyhexanoate--CoA ligase from Persephonella marina (strain DSM 14350 / EX-H1).